The sequence spans 259 residues: Protein odd-skipped-related 1 (259 aa).

3 consecutive C2H2-type zinc fingers follow at residues 168–190 (FVCK…ERTH), 196–218 (YTCD…RYIH), and 224–246 (FKCQ…KTLH).

Belongs to the Odd C2H2-type zinc-finger protein family.

The protein localises to the nucleus. In terms of biological role, transcriptional repressor. Required for pronephric kidney development. The polypeptide is Protein odd-skipped-related 1 (Xenopus tropicalis (Western clawed frog)).